Consider the following 911-residue polypeptide: Transferrin-binding protein A (911 aa).

An N-terminal signal peptide occupies residues 1-24; it reads MQQQHLFRLNILCLSLMTALPAYA. Residues 38 to 45 carry the TonB box motif; that stretch reads DTIQVKAK. The 126-residue stretch at 51–176 folds into the TBDR plug domain; that stretch reads RDNEVTGLGK…LAGSVAFQTK (126 aa). A TBDR beta-barrel domain is found at 187–911; that stretch reads QWGIQSKTAY…NYTFSLEMKF (725 aa). The TonB C-terminal box signature appears at 894 to 911; the sequence is NRYAAPGRNYTFSLEMKF.

It belongs to the TonB-dependent receptor family. Binds both human apo- and holo-transferrin (TF), via the TF C-terminus. Forms a large complex with TF and TbpB.

Its subcellular location is the cell outer membrane. Functionally, neisseria acquires iron by extracting it from serum transferrin (TF) in its human host. Acts as a TF receptor and is required for TF utilization. Binds both apo- and holo-TF, via the TF C-terminus. In Neisseria meningitidis serogroup B, this protein is Transferrin-binding protein A.